Consider the following 247-residue polypeptide: ATP synthase subunit a, chloroplastic (247 aa).

The next 5 helical transmembrane spans lie at Q38–V58, V95–L115, I134–T154, L199–L219, and G220–G240.

Belongs to the ATPase A chain family. In terms of assembly, F-type ATPases have 2 components, CF(1) - the catalytic core - and CF(0) - the membrane proton channel. CF(1) has five subunits: alpha(3), beta(3), gamma(1), delta(1), epsilon(1). CF(0) has four main subunits: a, b, b' and c.

It is found in the plastid. It localises to the chloroplast thylakoid membrane. In terms of biological role, key component of the proton channel; it plays a direct role in the translocation of protons across the membrane. The sequence is that of ATP synthase subunit a, chloroplastic from Liriodendron tulipifera (Tuliptree).